A 54-amino-acid polypeptide reads, in one-letter code: Ovomucoid (54 aa).

The 51-residue stretch at 4–54 (VDCSDYPKPACTVEYMPLCGSDNKTYGNKCNFCNAVVDSNGTLTLSHFGKC) folds into the Kazal-like domain. 3 cysteine pairs are disulfide-bonded: C6–C36, C14–C33, and C22–C54. N-linked (GlcNAc...) asparagine glycosylation occurs at N43.

It localises to the secreted. In Anser canagicus (Emperor goose), this protein is Ovomucoid.